The chain runs to 102 residues: Small ribosomal subunit protein uS10 (102 aa).

This sequence belongs to the universal ribosomal protein uS10 family. As to quaternary structure, part of the 30S ribosomal subunit.

Its function is as follows. Involved in the binding of tRNA to the ribosomes. The sequence is that of Small ribosomal subunit protein uS10 from Limosilactobacillus reuteri (strain DSM 20016) (Lactobacillus reuteri).